Reading from the N-terminus, the 67-residue chain is Small ribosomal subunit protein bS21 (67 aa).

It belongs to the bacterial ribosomal protein bS21 family.

The sequence is that of Small ribosomal subunit protein bS21 from Magnetococcus marinus (strain ATCC BAA-1437 / JCM 17883 / MC-1).